The following is a 1067-amino-acid chain: Cadmium/zinc-transporting ATPase HMA2 (1067 aa).

The 67-residue stretch at 9 to 75 (QKSYFDVLGI…ALNQARLEAS (67 aa)) folds into the HMA domain. Transmembrane regions (helical) follow at residues 94 to 114 (YVLLCGLLLVVSLFEHFWHPL), 117 to 137 (FALVAAAAGLPPIVLRSIAAI), 140 to 160 (LTLDVNILMLIAVAGAIALKD), 162 to 182 (SEAGFIVFLFTTAEWLETRAS), 313 to 333 (YTPAVVVMAGSVAAIPAIAKA), 342 to 362 (LALVLLVSACPCALVLSTPIA), 649 to 669 (IIVNIIFSVITKLAIVGLAFA), and 673 to 693 (LIWAAVLADVGTCLLVIMYSM). Disordered regions lie at residues 711–739 (HHGSPKKCCSSSHHGSHAKKNHGVSHHCS), 760–790 (HDHHHEHNHHEEPAHKHSSNQHGCHDHSHGH), and 960–996 (NDTHPVQEHSISIEESSDHHEHHHNEEHKAEDCGHHP). A compositionally biased stretch (basic residues) spans 724–735 (HGSHAKKNHGVS). 2 stretches are compositionally biased toward basic and acidic residues: residues 760–774 (HDHHHEHNHHEEPAH) and 975–996 (SSDHHEHHHNEEHKAEDCGHHP).

It belongs to the cation transport ATPase (P-type) (TC 3.A.3) family. Type IB subfamily. In terms of tissue distribution, in roots, localizes at the pericycle cells. In nodes, localizes in the phloem parenchyma and companion cells of both enlarged and diffuse vascular bundles.

The protein localises to the cell membrane. The catalysed reaction is Zn(2+)(in) + ATP + H2O = Zn(2+)(out) + ADP + phosphate + H(+). It catalyses the reaction Cd(2+)(in) + ATP + H2O = Cd(2+)(out) + ADP + phosphate + H(+). Its function is as follows. Zinc/cadmium transporter that plays an essential role in promoting translocation of zinc and cadmium from roots to shoots. May control cadmium loading into xylem. In roots, transports zinc and cadmium from the apoplast to the symplast to facilitate translocation via the phloem. In nodes, functions to load zinc and cadmium to the phloem for the preferential distribution to the upper nodes and panicles. This chain is Cadmium/zinc-transporting ATPase HMA2, found in Oryza sativa subsp. japonica (Rice).